Consider the following 80-residue polypeptide: Defensin-like protein 291 (80 aa).

Residues 1–29 (MAASKTTIFIVFVLCLSCTLLVNISGIQA) form the signal peptide. 3 disulfide bridges follow: C50-C70, C56-C75, and C62-C77.

This sequence belongs to the DEFL family.

It localises to the secreted. The polypeptide is Defensin-like protein 291 (Arabidopsis thaliana (Mouse-ear cress)).